The primary structure comprises 342 residues: Cell division protein FtsQ (342 aa).

Residues 1 to 80 (MDGAGSLTRS…ALVERYLPRR (80 aa)) lie on the Cytoplasmic side of the membrane. The helical transmembrane segment at 81–99 (VGISMTVLLLIGSCGFGIV) threads the bilayer. Residues 100 to 342 (KGGHLQDFVT…KKKKKAGDAA (243 aa)) are Periplasmic-facing. A POTRA domain is found at 124–192 (FRITSVVING…GQLMIELTER (69 aa)).

It belongs to the FtsQ/DivIB family. FtsQ subfamily.

Its subcellular location is the cell inner membrane. Its function is as follows. Essential cell division protein. The chain is Cell division protein FtsQ from Bradyrhizobium diazoefficiens (strain JCM 10833 / BCRC 13528 / IAM 13628 / NBRC 14792 / USDA 110).